Consider the following 176-residue polypeptide: Ribosome maturation factor RimM (176 aa).

One can recognise a PRC barrel domain in the interval 100–173 (PEEYYDYQLI…RLRIDPPPGL (74 aa)).

It belongs to the RimM family. As to quaternary structure, binds ribosomal protein uS19.

It is found in the cytoplasm. Functionally, an accessory protein needed during the final step in the assembly of 30S ribosomal subunit, possibly for assembly of the head region. Essential for efficient processing of 16S rRNA. May be needed both before and after RbfA during the maturation of 16S rRNA. It has affinity for free ribosomal 30S subunits but not for 70S ribosomes. This Acidothermus cellulolyticus (strain ATCC 43068 / DSM 8971 / 11B) protein is Ribosome maturation factor RimM.